A 266-amino-acid chain; its full sequence is Movement protein (266 aa).

Positions 211–244 (SKTGKKFSSKSENNSGNNRPKPDKNQRKEKGLKV) are disordered. Over residues 230 to 244 (PKPDKNQRKEKGLKV) the composition is skewed to basic and acidic residues.

Belongs to the tobamovirus movement protein family. In terms of assembly, binds to host RBCS at the plasmodesmata; this interaction seems required for viral systemic movement.

Its subcellular location is the host cytoplasm. It is found in the host cytoskeleton. It localises to the host cell junction. The protein resides in the host plasmodesma. Its function is as follows. Transports viral genome to neighboring plant cells directly through plasmosdesmata, without any budding. The movement protein allows efficient cell to cell propagation, by bypassing the host cell wall barrier. Forms a ribonucleoprotein complex with viral RNA. Binds microtubules and modulates microtubule stability. Can bind double-stranded DNA. Evades host resistance (R) protein (e.g. tomato ToMV resistance protein TM-2(2), AC Q71BG9) in ToMV/TMV resistant plants. The polypeptide is Movement protein (MP) (Tomato brown rugose fruit virus (isolate TOBRFV/Tomato/Jordan/Tom1-Jo/2015) (ToBRFV)).